The chain runs to 302 residues: MYSCLSGGLGNQMFQYAAAYILQRKLKQRSLVLDDSYFLDCSNRDTRRRFELNQFNICYDRLTTSKEKKEISIIRHVNRYRLPLFVTNSIFGVLLKKNYLPEAKFYEFLNNCKLQVKNGYCLFSYFQDATLIDSHRDMILPLFQINEDLLNLCNDLHIYKKVICENANTTSLHIRRGDYITNPHASKFHGVLPMDYYEKAIRYIEDVQGEQVIIVFSDDVKWAENTFANQPNYYVVNNSECEYSAIDMFLMSKCKNNIIANSTYSWWGAWLNTFEDKIVVSPRKWFAGNNKSKLTMDSWINL.

The protein belongs to the glycosyltransferase 11 family.

It carries out the reaction beta-D-Gal-(1-&gt;3)-alpha-D-GalNAc-(1-&gt;3)-alpha-D-GalNAc-di-trans,octa-cis-undecaprenyl diphosphate + GDP-beta-L-fucose = alpha-L-Fuc-(1-&gt;2)-beta-D-Gal-(1-&gt;3)-alpha-D-GalNAc-(1-&gt;3)-alpha-D-GalNAc-di-trans,octa-cis-undecaprenyl diphosphate + GDP + H(+). The protein operates within bacterial outer membrane biogenesis; LPS O-antigen biosynthesis. Functionally, involved in the assembly of the O-repeating unit during O-antigen biosynthesis. The protein is O-antigen biosynthesis glycosyltransferase WbnK of Escherichia coli.